The following is a 252-amino-acid chain: Phosphoribosylformylglycinamidine synthase subunit PurQ (252 aa).

The Glutamine amidotransferase type-1 domain occupies 6 to 237 (VGVVVFPGSN…FAHLAGTKRS (232 aa)). C89 functions as the Nucleophile in the catalytic mechanism. Residues H206 and E208 contribute to the active site.

Part of the FGAM synthase complex composed of 1 PurL, 1 PurQ and 2 PurS subunits.

Its subcellular location is the cytoplasm. The catalysed reaction is N(2)-formyl-N(1)-(5-phospho-beta-D-ribosyl)glycinamide + L-glutamine + ATP + H2O = 2-formamido-N(1)-(5-O-phospho-beta-D-ribosyl)acetamidine + L-glutamate + ADP + phosphate + H(+). The enzyme catalyses L-glutamine + H2O = L-glutamate + NH4(+). It functions in the pathway purine metabolism; IMP biosynthesis via de novo pathway; 5-amino-1-(5-phospho-D-ribosyl)imidazole from N(2)-formyl-N(1)-(5-phospho-D-ribosyl)glycinamide: step 1/2. In terms of biological role, part of the phosphoribosylformylglycinamidine synthase complex involved in the purines biosynthetic pathway. Catalyzes the ATP-dependent conversion of formylglycinamide ribonucleotide (FGAR) and glutamine to yield formylglycinamidine ribonucleotide (FGAM) and glutamate. The FGAM synthase complex is composed of three subunits. PurQ produces an ammonia molecule by converting glutamine to glutamate. PurL transfers the ammonia molecule to FGAR to form FGAM in an ATP-dependent manner. PurS interacts with PurQ and PurL and is thought to assist in the transfer of the ammonia molecule from PurQ to PurL. In Chlorobaculum parvum (strain DSM 263 / NCIMB 8327) (Chlorobium vibrioforme subsp. thiosulfatophilum), this protein is Phosphoribosylformylglycinamidine synthase subunit PurQ.